The primary structure comprises 467 residues: DNA methyltransferase 1-associated protein 1 (467 aa).

2 stretches are compositionally biased toward basic and acidic residues: residues 1–11 (MATGADVRDIL) and 26–48 (SKKDIINPDKKKSKKSSETLTFK). Residues 1–48 (MATGADVRDILELGGPEGDAASGTISKKDIINPDKKKSKKSSETLTFK) are disordered. A Glycyl lysine isopeptide (Lys-Gly) (interchain with G-Cter in SUMO2) cross-link involves residue Lys27. The region spanning 149–199 (DDAWTKAETDHLFDLSRRFDLRFVVIHDRYDHQQFKKRSVEDLKERYYHIC) is the SANT domain. Lys214 participates in a covalent cross-link: Glycyl lysine isopeptide (Lys-Gly) (interchain with G-Cter in SUMO2). A coiled-coil region spans residues 225–275 (RRKEQLERLYNRTPEQVAEEEYLLQELRKIEARKKEREKRSQDLQKLITAA). Basic and acidic residues predominate over residues 258 to 267 (KKEREKRSQD). Disordered stretches follow at residues 258 to 305 (KKER…PAVP) and 404 to 467 (LGGP…AKKP). Low complexity predominate over residues 406-422 (GPATPASGPGPASAEPA). At Thr445 the chain carries Phosphothreonine. A Phosphoserine modification is found at Ser448.

As to quaternary structure, component of the NuA4 histone acetyltransferase complex which contains the catalytic subunit KAT5/TIP60 and the subunits EP400, TRRAP/PAF400, BRD8/SMAP, EPC1, DMAP1/DNMAP1, RUVBL1/TIP49, RUVBL2, ING3, actin, ACTL6A/BAF53A, MORF4L1/MRG15, MORF4L2/MRGX, MRGBP, YEATS4/GAS41, VPS72/YL1 and MEAF6. Component of a NuA4-related complex which contains EP400, TRRAP/PAF400, SRCAP, BRD8/SMAP, EPC1, DMAP1/DNMAP1, RUVBL1/TIP49, RUVBL2, actin, ACTL6A/BAF53A, VPS72 and YEATS4/GAS41. DMAP1 also forms a complex with DNMT1 and HDAC2. Throughout S phase it interacts directly with the N-terminus of DNMT1, which serves to recruit DMAP1 to replication foci. DMAP1 interacts with ING1, a component of the mSin3A transcription repressor complex, although this interaction is not required for recruitment of ING1 to heterochromatin. Interacts directly with the transcriptional corepressor TSG101. Interacts with the pro-apoptotic protein DAXX. Interacts with URI1.

The protein localises to the nucleus. It is found in the cytoplasm. Involved in transcription repression and activation. Its interaction with HDAC2 may provide a mechanism for histone deacetylation in heterochromatin following replication of DNA at late firing origins. Can also repress transcription independently of histone deacetylase activity. May specifically potentiate DAXX-mediated repression of glucocorticoid receptor-dependent transcription. Component of the NuA4 histone acetyltransferase (HAT) complex which is involved in transcriptional activation of select genes principally by acetylation of nucleosomal histones H4 and H2A. This modification may both alter nucleosome - DNA interactions and promote interaction of the modified histones with other proteins which positively regulate transcription. This complex may be required for the activation of transcriptional programs associated with oncogene and proto-oncogene mediated growth induction, tumor suppressor mediated growth arrest and replicative senescence, apoptosis, and DNA repair. NuA4 may also play a direct role in DNA repair when recruited to sites of DNA damage. Participates in the nuclear localization of URI1 and increases its transcriptional corepressor activity. This chain is DNA methyltransferase 1-associated protein 1 (DMAP1), found in Homo sapiens (Human).